The chain runs to 166 residues: NAD(P)H-quinone oxidoreductase subunit I, chloroplastic (166 aa).

4Fe-4S ferredoxin-type domains lie at 55–84 (GRIH…VDWK) and 95–124 (LNYS…MTEE). 8 residues coordinate [4Fe-4S] cluster: Cys64, Cys67, Cys70, Cys74, Cys104, Cys107, Cys110, and Cys114.

It belongs to the complex I 23 kDa subunit family. In terms of assembly, NDH is composed of at least 16 different subunits, 5 of which are encoded in the nucleus. [4Fe-4S] cluster serves as cofactor.

The protein localises to the plastid. Its subcellular location is the chloroplast thylakoid membrane. The enzyme catalyses a plastoquinone + NADH + (n+1) H(+)(in) = a plastoquinol + NAD(+) + n H(+)(out). The catalysed reaction is a plastoquinone + NADPH + (n+1) H(+)(in) = a plastoquinol + NADP(+) + n H(+)(out). Its function is as follows. NDH shuttles electrons from NAD(P)H:plastoquinone, via FMN and iron-sulfur (Fe-S) centers, to quinones in the photosynthetic chain and possibly in a chloroplast respiratory chain. The immediate electron acceptor for the enzyme in this species is believed to be plastoquinone. Couples the redox reaction to proton translocation, and thus conserves the redox energy in a proton gradient. The chain is NAD(P)H-quinone oxidoreductase subunit I, chloroplastic from Guardiola tulocarpus.